The chain runs to 269 residues: Tryptophan synthase alpha chain (269 aa).

Catalysis depends on proton acceptor residues Glu49 and Asp60.

It belongs to the TrpA family. In terms of assembly, tetramer of two alpha and two beta chains.

The enzyme catalyses (1S,2R)-1-C-(indol-3-yl)glycerol 3-phosphate + L-serine = D-glyceraldehyde 3-phosphate + L-tryptophan + H2O. It participates in amino-acid biosynthesis; L-tryptophan biosynthesis; L-tryptophan from chorismate: step 5/5. The alpha subunit is responsible for the aldol cleavage of indoleglycerol phosphate to indole and glyceraldehyde 3-phosphate. This chain is Tryptophan synthase alpha chain, found in Pseudomonas entomophila (strain L48).